A 101-amino-acid chain; its full sequence is Small ribosomal subunit protein eS24 (101 aa).

This sequence belongs to the eukaryotic ribosomal protein eS24 family.

The polypeptide is Small ribosomal subunit protein eS24 (Methanocaldococcus jannaschii (strain ATCC 43067 / DSM 2661 / JAL-1 / JCM 10045 / NBRC 100440) (Methanococcus jannaschii)).